Reading from the N-terminus, the 409-residue chain is Type II methyltransferase M.BsuFI (409 aa).

The region spanning 101-402 (LTFIDLFAGI…GAMKERLLLA (302 aa)) is the SAM-dependent MTase C5-type domain. Residue Cys170 is part of the active site.

It belongs to the class I-like SAM-binding methyltransferase superfamily. C5-methyltransferase family.

The enzyme catalyses a 2'-deoxycytidine in DNA + S-adenosyl-L-methionine = a 5-methyl-2'-deoxycytidine in DNA + S-adenosyl-L-homocysteine + H(+). In terms of biological role, a methylase, recognizes the double-stranded sequence 5'-CCGG-3', methylates C-1 on both strands, and protects the DNA from cleavage by the BsuFI endonuclease. The chain is Type II methyltransferase M.BsuFI (hsdFM) from Bacillus subtilis.